We begin with the raw amino-acid sequence, 189 residues long: UPF0251 protein MTH_1178 (189 aa).

This sequence belongs to the UPF0251 family.

The protein is UPF0251 protein MTH_1178 of Methanothermobacter thermautotrophicus (strain ATCC 29096 / DSM 1053 / JCM 10044 / NBRC 100330 / Delta H) (Methanobacterium thermoautotrophicum).